Reading from the N-terminus, the 545-residue chain is Endo-beta-N-acetylglucosaminidase (545 aa).

A signal peptide spans 1-36 (MTFIKQMMPRYVASMTAGIVAAAMAATCAFAPVANA). In terms of domain architecture, GH18 spans 51-333 (RHFMVYYRAW…EDLRRIVPSN (283 aa)). The active-site Proton donor is Glu184. A disordered region spans residues 486–511 (PVPTPDSTDQNGNRDKVTNHKVQGQP). A helical membrane pass occupies residues 518 to 538 (GISTDIIVAVGVTLAIAGVAL).

It belongs to the glycosyl hydrolase 18 family.

It is found in the cell membrane. It catalyses the reaction an N(4)-(oligosaccharide-(1-&gt;3)-[oligosaccharide-(1-&gt;6)]-beta-D-Man-(1-&gt;4)-beta-D-GlcNAc-(1-&gt;4)-alpha-D-GlcNAc)-L-asparaginyl-[protein] + H2O = an oligosaccharide-(1-&gt;3)-[oligosaccharide-(1-&gt;6)]-beta-D-Man-(1-&gt;4)-D-GlcNAc + N(4)-(N-acetyl-beta-D-glucosaminyl)-L-asparaginyl-[protein]. Endoglycosidase with broad specificity that cleaves the chitobiose core of high mannose and complex N-linked glycans. Is able to release N-glycans from diverse host glycoproteins such as human and bovine lactoferrin, immunoglobulins A and G, and ribonuclease B. Is active directly on human breast milk - a complex matrix of lipids, oligosaccharides, and proteins with disparate glycosylation types - successfully removing a significant proportion of the total amount of N-glycans. Does not recognize O-linked glycans or free human milk oligosaccharides (HMO). The chain is Endo-beta-N-acetylglucosaminidase from Bifidobacterium longum subsp. infantis (strain ATCC 15697 / DSM 20088 / JCM 1222 / NCTC 11817 / S12).